Reading from the N-terminus, the 232-residue chain is Probable transcriptional regulatory protein Bd1964 (232 aa).

It belongs to the TACO1 family.

The protein localises to the cytoplasm. This is Probable transcriptional regulatory protein Bd1964 from Bdellovibrio bacteriovorus (strain ATCC 15356 / DSM 50701 / NCIMB 9529 / HD100).